Reading from the N-terminus, the 553-residue chain is Ribonuclease J 2 (553 aa).

4 residues coordinate Zn(2+): His-69, His-71, His-138, and Asp-160. Residue Arg-361–His-365 coordinates substrate.

Belongs to the metallo-beta-lactamase superfamily. RNA-metabolizing metallo-beta-lactamase-like family. Bacterial RNase J subfamily. Homodimer, may be a subunit of the RNA degradosome. Zn(2+) serves as cofactor.

The protein localises to the cytoplasm. Its function is as follows. An RNase that has 5'-3' exonuclease and possibly endonuclease activity. Involved in maturation of rRNA and in some organisms also mRNA maturation and/or decay. Has an overlapping but not completely redundant role with RNase J1 in the decay of mRNA. This Streptococcus pyogenes serotype M3 (strain ATCC BAA-595 / MGAS315) protein is Ribonuclease J 2.